The following is a 462-amino-acid chain: tRNA modification GTPase MnmE (462 aa).

Residues Arg34, Glu92, and Lys131 each coordinate (6S)-5-formyl-5,6,7,8-tetrahydrofolate. The TrmE-type G domain occupies 227–386 (GLQVVIAGKP…LIDAITAHAG (160 aa)). Residue Asn237 participates in K(+) binding. GTP is bound by residues 237-242 (NAGKSS), 256-262 (TDIAGTT), and 281-284 (DTAG). Ser241 is a Mg(2+) binding site. 3 residues coordinate K(+): Thr256, Ile258, and Thr261. Thr262 is a Mg(2+) binding site. Residue Lys462 coordinates (6S)-5-formyl-5,6,7,8-tetrahydrofolate.

The protein belongs to the TRAFAC class TrmE-Era-EngA-EngB-Septin-like GTPase superfamily. TrmE GTPase family. Homodimer. Heterotetramer of two MnmE and two MnmG subunits. It depends on K(+) as a cofactor.

It localises to the cytoplasm. Functionally, exhibits a very high intrinsic GTPase hydrolysis rate. Involved in the addition of a carboxymethylaminomethyl (cmnm) group at the wobble position (U34) of certain tRNAs, forming tRNA-cmnm(5)s(2)U34. In Acinetobacter baylyi (strain ATCC 33305 / BD413 / ADP1), this protein is tRNA modification GTPase MnmE.